Consider the following 85-residue polypeptide: Defensin-like protein 112 (85 aa).

A signal peptide spans 1 to 24; sequence MAISKKMLTTFVLTILLAVSFVHC. Disulfide bonds link Cys40/Cys80, Cys46/Cys71, Cys56/Cys78, and Cys60/Cys79.

This sequence belongs to the DEFL family.

Its subcellular location is the secreted. This Arabidopsis thaliana (Mouse-ear cress) protein is Defensin-like protein 112.